An 866-amino-acid chain; its full sequence is Probable beta-glucosidase F (866 aa).

The N-terminal stretch at 1–20 is a signal peptide; the sequence is MAAFPAYLALLSYLVPGALS. Residues asparagine 65, asparagine 73, and asparagine 257 are each glycosylated (N-linked (GlcNAc...) asparagine). Aspartate 285 is a catalytic residue. 8 N-linked (GlcNAc...) asparagine glycosylation sites follow: asparagine 328, asparagine 360, asparagine 395, asparagine 421, asparagine 474, asparagine 659, asparagine 664, and asparagine 724. A disordered region spans residues 725–748; that stretch reads SSKTYPYPDGYTTEPKPAPRAGGA.

This sequence belongs to the glycosyl hydrolase 3 family.

Its subcellular location is the secreted. It carries out the reaction Hydrolysis of terminal, non-reducing beta-D-glucosyl residues with release of beta-D-glucose.. It participates in glycan metabolism; cellulose degradation. In terms of biological role, beta-glucosidases are one of a number of cellulolytic enzymes involved in the degradation of cellulosic biomass. Catalyzes the last step releasing glucose from the inhibitory cellobiose. This Aspergillus flavus (strain ATCC 200026 / FGSC A1120 / IAM 13836 / NRRL 3357 / JCM 12722 / SRRC 167) protein is Probable beta-glucosidase F (bglF).